Here is a 377-residue protein sequence, read N- to C-terminus: NADH dehydrogenase [ubiquinone] 1 alpha subcomplex subunit 9, mitochondrial (377 aa).

Residues 1 to 35 (MAAAVRFRVVRALPMSRPAITAAATSVFCGSSHRQ) constitute a mitochondrion transit peptide. K175 carries the N6-succinyllysine modification. Residues K189 and K370 each carry the N6-acetyllysine modification.

The protein belongs to the complex I NDUFA9 subunit family. As to quaternary structure, complex I is composed of 45 different subunits. This a component of the hydrophobic protein fraction. Interacts with BLOC1S1. Interacts with SLC2A4. Interacts with CLOCK. Interacts with RAB5IF. Requires FAD as cofactor. In terms of processing, acetylated on lysine residues. BLOC1S1 is required for acetylation. Acetylated by CLOCK in a circadian manner.

Its subcellular location is the mitochondrion matrix. Functionally, accessory subunit of the mitochondrial membrane respiratory chain NADH dehydrogenase (Complex I), that is believed not to be involved in catalysis. Complex I functions in the transfer of electrons from NADH to the respiratory chain. The immediate electron acceptor for the enzyme is believed to be ubiquinone. The polypeptide is NADH dehydrogenase [ubiquinone] 1 alpha subcomplex subunit 9, mitochondrial (Ndufa9) (Mus musculus (Mouse)).